The sequence spans 399 residues: CCA-adding enzyme (399 aa).

2 residues coordinate ATP: G32 and R35. 2 residues coordinate CTP: G32 and R35. Mg(2+)-binding residues include D45 and D47. R116, D159, R162, R165, and R168 together coordinate ATP. CTP-binding residues include R116, D159, R162, R165, and R168.

Belongs to the tRNA nucleotidyltransferase/poly(A) polymerase family. Bacterial CCA-adding enzyme type 3 subfamily. In terms of assembly, homodimer. Requires Mg(2+) as cofactor.

The catalysed reaction is a tRNA precursor + 2 CTP + ATP = a tRNA with a 3' CCA end + 3 diphosphate. It carries out the reaction a tRNA with a 3' CCA end + 2 CTP + ATP = a tRNA with a 3' CCACCA end + 3 diphosphate. Catalyzes the addition and repair of the essential 3'-terminal CCA sequence in tRNAs without using a nucleic acid template. Adds these three nucleotides in the order of C, C, and A to the tRNA nucleotide-73, using CTP and ATP as substrates and producing inorganic pyrophosphate. tRNA 3'-terminal CCA addition is required both for tRNA processing and repair. Also involved in tRNA surveillance by mediating tandem CCA addition to generate a CCACCA at the 3' terminus of unstable tRNAs. While stable tRNAs receive only 3'-terminal CCA, unstable tRNAs are marked with CCACCA and rapidly degraded. The polypeptide is CCA-adding enzyme (Streptococcus pneumoniae serotype 19F (strain G54)).